Here is a 142-residue protein sequence, read N- to C-terminus: Large ribosomal subunit protein uL11 (142 aa).

Belongs to the universal ribosomal protein uL11 family. In terms of assembly, part of the ribosomal stalk of the 50S ribosomal subunit. Interacts with L10 and the large rRNA to form the base of the stalk. L10 forms an elongated spine to which L12 dimers bind in a sequential fashion forming a multimeric L10(L12)X complex. In terms of processing, one or more lysine residues are methylated.

Functionally, forms part of the ribosomal stalk which helps the ribosome interact with GTP-bound translation factors. This is Large ribosomal subunit protein uL11 from Shewanella amazonensis (strain ATCC BAA-1098 / SB2B).